The chain runs to 278 residues: Cation-dependent mannose-6-phosphate receptor (278 aa).

An N-terminal signal peptide occupies residues 1 to 21 (MFPLSGCWRTELLLLLLLAVA). At 22–188 (VRESWQIEEK…ACSPEVSHLS (167 aa)) the chain is on the lumenal side. The 152-residue stretch at 31 to 182 (KSCDLVGEKD…EMDSSLACSP (152 aa)) folds into the MRH domain. Cys33 and Cys79 are joined by a disulfide. Asn58, Asn84, Asn95, Asn108, and Asn114 each carry an N-linked (GlcNAc...) asparagine glycan. Intrachain disulfides connect Cys133–Cys168 and Cys146–Cys180. The helical transmembrane segment at 189–209 (VGSILLVIFASLVAVYIIGGF) threads the bilayer. At 210 to 278 (LYQRLVVGAK…EERDDHLLPM (69 aa)) the chain is on the cytoplasmic side. Positions 256-278 (YRGVGDDQLGEESEERDDHLLPM) are disordered. A Phosphoserine modification is found at Ser268.

In terms of assembly, homodimer. Binds GGA1, GGA2 and GGA3.

It localises to the lysosome membrane. Functionally, transport of phosphorylated lysosomal enzymes from the Golgi complex and the cell surface to lysosomes. Lysosomal enzymes bearing phosphomannosyl residues bind specifically to mannose-6-phosphate receptors in the Golgi apparatus and the resulting receptor-ligand complex is transported to an acidic prelyosomal compartment where the low pH mediates the dissociation of the complex. The protein is Cation-dependent mannose-6-phosphate receptor (M6pr) of Rattus norvegicus (Rat).